The sequence spans 368 residues: Probable pectate lyase 4 (368 aa).

Residues 1-25 (MASLVVIVSLLLAAFASPLLETAHS) form the signal peptide. A glycan (N-linked (GlcNAc...) asparagine) is linked at Asn-27. Residues Asp-167, Asp-191, and Asp-195 each contribute to the Ca(2+) site. Arg-247 is a catalytic residue.

It belongs to the polysaccharide lyase 1 family. It depends on Ca(2+) as a cofactor.

The enzyme catalyses Eliminative cleavage of (1-&gt;4)-alpha-D-galacturonan to give oligosaccharides with 4-deoxy-alpha-D-galact-4-enuronosyl groups at their non-reducing ends.. Its pathway is glycan metabolism; pectin degradation; 2-dehydro-3-deoxy-D-gluconate from pectin: step 2/5. This chain is Probable pectate lyase 4, found in Arabidopsis thaliana (Mouse-ear cress).